The following is a 48-amino-acid chain: Small, acid-soluble spore protein P (48 aa).

The segment covering 1 to 12 has biased composition (basic and acidic residues); that stretch reads MTNKNTSKDMHK. The interval 1-48 is disordered; that stretch reads MTNKNTSKDMHKNAPKGHNPGQPEPLSGSKKVKNRNHTRQKHNTSHDM. Over residues 30–48 the composition is skewed to basic residues; it reads KKVKNRNHTRQKHNTSHDM.

It belongs to the SspP family.

It is found in the spore core. The polypeptide is Small, acid-soluble spore protein P (Bacillus velezensis (strain DSM 23117 / BGSC 10A6 / LMG 26770 / FZB42) (Bacillus amyloliquefaciens subsp. plantarum)).